The primary structure comprises 146 residues: Wheatwin-1 (146 aa).

The first 21 residues, 1–21 (MAARPMLVVALLCAAAAAATA), serve as a signal peptide directing secretion. Glutamine 22 is modified (pyrrolidone carboxylic acid). Residues 22-146 (QQATNVRATY…VNYQFVDCRD (125 aa)) form the Barwin domain. Cystine bridges form between cysteine 52–cysteine 84, cysteine 73–cysteine 107, and cysteine 87–cysteine 144.

In terms of assembly, monomer.

Inhibited by 5'-ADP. Shows antifungal activity towards B.cinerea and towards the wheat-specific pathogenic fungi F.culmorum and F.graminearum (groups 1 and 2). Has ribonuclease activity. In Triticum aestivum (Wheat), this protein is Wheatwin-1 (PR4A).